The primary structure comprises 222 residues: 2-C-methyl-D-erythritol 4-phosphate cytidylyltransferase (222 aa).

The protein belongs to the IspD/TarI cytidylyltransferase family. IspD subfamily.

The catalysed reaction is 2-C-methyl-D-erythritol 4-phosphate + CTP + H(+) = 4-CDP-2-C-methyl-D-erythritol + diphosphate. Its pathway is isoprenoid biosynthesis; isopentenyl diphosphate biosynthesis via DXP pathway; isopentenyl diphosphate from 1-deoxy-D-xylulose 5-phosphate: step 2/6. In terms of biological role, catalyzes the formation of 4-diphosphocytidyl-2-C-methyl-D-erythritol from CTP and 2-C-methyl-D-erythritol 4-phosphate (MEP). The polypeptide is 2-C-methyl-D-erythritol 4-phosphate cytidylyltransferase (Thermotoga neapolitana (strain ATCC 49049 / DSM 4359 / NBRC 107923 / NS-E)).